A 269-amino-acid polypeptide reads, in one-letter code: 2-heptyl-3-hydroxy-4(1H)-quinolone dioxygenase (269 aa).

His-97 is a binding site for substrate. His-246 serves as the catalytic Proton donor/acceptor.

This sequence belongs to the AB hydrolase superfamily. Monomer.

It carries out the reaction 2-heptyl-3-hydroxy-4(1H)-quinolone + O2 = N-octanoylanthranilate + CO + H(+). In terms of biological role, ring-cleaving dioxygenase involved in the degradation pathway of the Pseudomonas aeruginosa quorum sensing signal molecules HHQ (2-heptyl-4-quinolone) and PQS (2-heptyl-3-hydroxy-4(1H)-quinolone) to anthranilate. Catalyzes the cleavage of PQS to form N-octanoylanthranilate and carbon monoxide. Thus, leads to the inactivation of PQS that plays a central role in the regulation of virulence factor production by P.aeruginosa, thereby quenching the production of antimicrobials, which may contribute to the competitiveness of M.abscessus in presence of P.aeruginosa. In vitro, can also use other 2-alkyl-3-hydroxy-4(1H)-quinolone (AHQ) substrates with shorter alkyl substituents at C2, but with lower efficiency. This Mycobacteroides abscessus (strain ATCC 19977 / DSM 44196 / CCUG 20993 / CIP 104536 / JCM 13569 / NCTC 13031 / TMC 1543 / L948) (Mycobacterium abscessus) protein is 2-heptyl-3-hydroxy-4(1H)-quinolone dioxygenase.